The following is a 55-amino-acid chain: VILLLLIASAPSVDAQPKTKDDVPLAPLHDNAKSALQHLNQRCCQTFYWCCGQGK.

The first 15 residues, 1–15, serve as a signal peptide directing secretion; that stretch reads VILLLLIASAPSVDA. The propeptide occupies 16 to 41; it reads QPKTKDDVPLAPLHDNAKSALQHLNQ. Glutamine amide is present on Q53.

In terms of processing, contains 2 disulfide bonds that can be either 'C1-C3, C2-C4' or 'C1-C4, C2-C3', since these disulfide connectivities have been observed for conotoxins with cysteine framework V (for examples, see AC P0DQQ7 and AC P81755). Expressed by the venom duct.

The protein localises to the secreted. The polypeptide is Conotoxin vc5b (Conus victoriae (Queen Victoria cone)).